The chain runs to 623 residues: Membralin-like protein At1g60995 (623 aa).

The chain crosses the membrane as a helical span at residues 24–44 (GFLEYTYLFVAITLFCILVVM). A disordered region spans residues 99–119 (SLEVSKTDQESSTSEENTDDT). The next 4 helical transmembrane spans lie at 315–335 (GVLM…SFTL), 363–383 (IFVH…ILFF), 392–412 (LLAF…LISV), and 424–444 (FFLL…YGFS). Disordered regions lie at residues 506–567 (NRTT…QAGA) and 602–623 (EAQV…LSVD). Polar residues predominate over residues 514-531 (PSGPNHTTPNQNTETRSF).

This sequence belongs to the membralin family.

It is found in the membrane. This chain is Membralin-like protein At1g60995, found in Arabidopsis thaliana (Mouse-ear cress).